Reading from the N-terminus, the 64-residue chain is Large ribosomal subunit protein uL29 (64 aa).

The protein belongs to the universal ribosomal protein uL29 family.

The polypeptide is Large ribosomal subunit protein uL29 (Verminephrobacter eiseniae (strain EF01-2)).